The following is a 541-amino-acid chain: Calcium-dependent protein kinase 9 (541 aa).

Residues 1–75 (MGNCFAKNHG…PGLSPKTTTK (75 aa)) form a disordered region. G2 is lipidated: N-myristoyl glycine. A compositionally biased stretch (polar residues) spans 14-54 (PQQNGNTTRSVEVGVTNQDPPSYTPQARTTQQPEKPGSVNS). The residue at position 69 (S69) is a Phosphoserine. In terms of domain architecture, Protein kinase spans 91-349 (YTLGKELGRG…AADVLQHPWL (259 aa)). ATP-binding positions include 97–105 (LGRGQFGVT) and K120. D215 (proton acceptor) is an active-site residue. S255 carries the post-translational modification Phosphoserine. Residues 355–385 (ASDKPIDSAVLSRMKQFRAMNKLKKLALKVI) are autoinhibitory domain. EF-hand domains follow at residues 392-427 (EEIQGLKAMFANIDTDNSGTITYEELKEGLAKLGSK), 428-463 (LTEAEVKQLMDAADVDGNGSIDYIEFITATMHRHRL), 464-499 (ESNENLYKAFQHFDKDSSGYITIDELESALKEYGMG), and 500-534 (DDATIKEVLSDVDSDNDGRINYEEFCAMMRSGNPQ). The Ca(2+) site is built by D405, D407, S409, T411, E416, D441, D443, N445, S447, E452, D477, D479, S481, Y483, E488, D512, D514, D516, R518, and E523.

Belongs to the protein kinase superfamily. Ser/Thr protein kinase family. CDPK subfamily.

It localises to the cell membrane. It catalyses the reaction L-seryl-[protein] + ATP = O-phospho-L-seryl-[protein] + ADP + H(+). The catalysed reaction is L-threonyl-[protein] + ATP = O-phospho-L-threonyl-[protein] + ADP + H(+). With respect to regulation, activated by calcium. Autophosphorylation may play an important role in the regulation of the kinase activity. May play a role in signal transduction pathways that involve calcium as a second messenger. This chain is Calcium-dependent protein kinase 9 (CPK9), found in Arabidopsis thaliana (Mouse-ear cress).